The following is a 135-amino-acid chain: Galectin-1 (135 aa).

N-acetylalanine is present on Ala-2. One can recognise a Galectin domain in the interval 4–135 (GLVASNLNLK…DFKIKCVAFE (132 aa)). Residues Lys-13, Lys-19, and Lys-29 each carry the N6-acetyllysine modification. A Phosphoserine modification is found at Ser-30. Residues 45–49 (HFNPR), His-53, Asn-62, and 69–72 (WGAE) each bind a beta-D-galactoside. The residue at position 128 (Lys-128) is an N6-acetyllysine.

As to quaternary structure, homodimer. Binds LGALS3BP. Interacts with CD2, CD3, CD4, CD6, CD7, CD43, ALCAM and CD45. Interacts with laminin (via poly-N-acetyllactosamine). Interacts with SUSD2. Interacts with cargo receptor TMED10; the interaction mediates the translocation from the cytoplasm into the ERGIC (endoplasmic reticulum-Golgi intermediate compartment) and thereby secretion.

It localises to the secreted. The protein localises to the extracellular space. It is found in the extracellular matrix. Its subcellular location is the cytoplasm. Functionally, lectin that binds beta-galactoside and a wide array of complex carbohydrates. Plays a role in regulating apoptosis, cell proliferation and cell differentiation. Inhibits CD45 protein phosphatase activity and therefore the dephosphorylation of Lyn kinase. Strong inducer of T-cell apoptosis. The chain is Galectin-1 (LGALS1) from Sus scrofa (Pig).